A 386-amino-acid chain; its full sequence is Methionine aminotransferase (386 aa).

Lysine 236 carries the post-translational modification N6-(pyridoxal phosphate)lysine.

It belongs to the class-I pyridoxal-phosphate-dependent aminotransferase family. Homodimer. Pyridoxal 5'-phosphate is required as a cofactor.

It is found in the cytoplasm. It carries out the reaction a 2-oxocarboxylate + L-methionine = 4-methylsulfanyl-2-oxobutanoate + an L-alpha-amino acid. Shows aminotransferase activity with methionine and histidine as substrates, and to a lesser extent also with phenylalanine. This Escherichia coli (strain K12) protein is Methionine aminotransferase (ybdL).